Reading from the N-terminus, the 138-residue chain is ATP synthase epsilon chain (138 aa).

Belongs to the ATPase epsilon chain family. As to quaternary structure, F-type ATPases have 2 components, CF(1) - the catalytic core - and CF(0) - the membrane proton channel. CF(1) has five subunits: alpha(3), beta(3), gamma(1), delta(1), epsilon(1). CF(0) has three main subunits: a, b and c.

Its subcellular location is the cell membrane. Its function is as follows. Produces ATP from ADP in the presence of a proton gradient across the membrane. The chain is ATP synthase epsilon chain (atpC) from Streptococcus mutans serotype c (strain ATCC 700610 / UA159).